Consider the following 376-residue polypeptide: Alpha-2,8-sialyltransferase 8E (376 aa).

Residues 1–17 (MRYADPSANRDLLGSRT) are Cytoplasmic-facing. A helical; Signal-anchor for type II membrane protein transmembrane segment spans residues 18–38 (LLFIFICAFALVTLLQQILYG). At 39–376 (RNYIKRYFEF…RVHTGTCSCC (338 aa)) the chain is on the lumenal side. Asn56 and Asn96 each carry an N-linked (GlcNAc...) asparagine glycan. 2 cysteine pairs are disulfide-bonded: Cys164–Cys313 and Cys178–Cys373. Substrate is bound by residues Asn192 and 214-216 (NPS). N-linked (GlcNAc...) asparagine glycosylation is found at Asn241 and Asn284. 300–302 (STG) is a substrate binding site. The active-site Proton donor/acceptor is His348.

It belongs to the glycosyltransferase 29 family. As to expression, expressed in fetal and adult brain, adult heart and skeletal muscle. Expressed in fetal and adult brain, not detected in adult heart and skeletal muscle.

It is found in the golgi apparatus membrane. The catalysed reaction is a ganglioside GT1b (d18:1(4E)) + CMP-N-acetyl-beta-neuraminate = a ganglioside GQ1b (d18:1(4E)) + CMP + H(+). It carries out the reaction a ganglioside GD3 (d18:1(4E)) + CMP-N-acetyl-beta-neuraminate = a ganglioside GT3 (d18:1(4E)) + CMP + H(+). The enzyme catalyses a ganglioside GD1a (d18:1(4E)) + CMP-N-acetyl-beta-neuraminate = a ganglioside GT1a (d18:1(4E)) + CMP + H(+). It catalyses the reaction a ganglioside GM1b (d18:1(4E)) + CMP-N-acetyl-beta-neuraminate = a ganglioside GD1c (d18:1(4E)) + CMP + H(+). The catalysed reaction is a ganglioside GQ1c (d18:1(4E)) + CMP-N-acetyl-beta-neuraminate = a ganglioside GP1c (d18:1(4E)) + CMP + H(+). The protein operates within protein modification; protein glycosylation. In terms of biological role, involved in the synthesis of gangliosides GD1c, GT1a, GQ1b, GP1c and GT3 from GD1a, GT1b, GM1b and GD3 respectively. The sequence is that of Alpha-2,8-sialyltransferase 8E from Homo sapiens (Human).